The sequence spans 4377 residues: Ankyrin-3 (4377 aa).

Residues 1-44 (MAHAASQLKKNRDLEINAEEEPEKKRKHRKRSRDRKKKSDANAS) form a disordered region. Over residues 25–38 (KRKHRKRSRDRKKK) the composition is skewed to basic residues. S39 carries the post-translational modification Phosphoserine. 23 ANK repeats span residues 73–102 (NGLN…NVDA), 106–135 (KGNT…NVNA), 139–168 (NGFT…SQSL), 172–201 (DGFT…KGKV), 203–230 (LPAL…NADV), 234–263 (SGFT…AVDF), 267–296 (NDIT…KIDA), 300–329 (DGLT…PILS), 333–362 (NGLS…PVDD), 366–395 (DYLT…NPNA), 399–428 (NGFT…SIQA), 432–461 (SGLT…SPNT), 465–494 (RGET…QVEA), 498–527 (DDQT…SPNA), 531–560 (SGYT…SLSI), 564–593 (KGFT…SPDA), 597–626 (SGLT…SPHA), 630–659 (NGYT…DANA), 663–692 (QGIA…NVNL), 696–725 (SGLT…HVDA), 729–758 (MGYT…KVNA), 762–791 (NGYT…SPNE), and 795–825 (NGNT…TMTT). T468 is subject to Phosphoserine. S623 is subject to Phosphoserine. Residues T765 and E791 each carry the phosphoserine modification. 9 positions are modified to phosphoserine: S847, S861, S867, S913, S916, S922, S957, S959, and S1113. ZU5 domains are found at residues 984-1139 (FLVS…VVSR) and 1141-1288 (KQES…LADC). The UPA domain stretch occupies residues 1273-1407 (VSFTTNVSAR…SIKIRDTSQE (135 aa)). 3 positions are modified to phosphoserine: S1445, S1459, and S1470. A compositionally biased stretch (low complexity) spans 1519 to 1539 (SGFTSLSSSSSNTPSASPLKS). Residues 1519 to 1540 (SGFTSLSSSSSNTPSASPLKSI) are disordered. A phosphoserine mark is found at S1622, S1625, S1632, I1651, L1658, S1984, S2111, S2123, and S2126. Disordered stretches follow at residues 1968–1987 (VDNK…SPED), 2107–2159 (TILE…VPIP), 2176–2245 (YDPS…EETH), 2299–2322 (AVSP…DNQM), 2383–2433 (FPCS…ISDD), 2474–2508 (DVSH…KIAT), 2588–2751 (LTEV…VKKI), 2795–2824 (QSNE…MPDS), 3036–3067 (PPLE…DVFD), 3131–3272 (TFYT…KKHH), 3298–3516 (PVIR…SVFP), 3538–3607 (KGLD…HEGK), 3635–3718 (GEHT…DPKL), 3868–3897 (KATS…QSEK), and 4019–4090 (KKMQ…CERT). The segment covering 1977 to 1986 (PKSDKGHSPE) has biased composition (basic and acidic residues). The segment covering 2115–2136 (FSQHDQDKSPLSDSGFETRSEK) has biased composition (basic and acidic residues). Residues 2137-2146 (TPSAPQSAES) are compositionally biased toward polar residues. Over residues 2299 to 2308 (AVSPDVHKSA) the composition is skewed to basic and acidic residues. Residues 2390–2399 (GQQEEEELTA) are compositionally biased toward acidic residues. Over residues 2407 to 2417 (LESSRVNTPVS) the composition is skewed to polar residues. Composition is skewed to basic and acidic residues over residues 2497-2508 (GSDKRSREKIAT) and 2588-2612 (LTEV…PEKK). Residues 2622–2631 (SSQSPTSSSP) show a composition bias toward low complexity. A compositionally biased stretch (polar residues) spans 2706-2716 (SGFQLKQSKLS). The segment covering 2720–2742 (LKFEQGTHAKSKDMSQEDRKSDG) has biased composition (basic and acidic residues). The span at 2796–2807 (SNEIVVNDSGSD) shows a compositional bias: polar residues. 2 stretches are compositionally biased toward polar residues: residues 3154–3186 (EQVS…SKTP) and 3214–3224 (KSTSLKQTTVE). 2 stretches are compositionally biased toward basic and acidic residues: residues 3227 to 3242 (AVER…DSNQ) and 3335 to 3361 (KLKE…KELE). Residues 3377–3402 (SPQNEIAQNGNNDQSITECSIATTAE) show a composition bias toward polar residues. Over residues 3409 to 3428 (ATEIDSLDGYDLQDEDDGLT) the composition is skewed to acidic residues. 2 stretches are compositionally biased toward basic and acidic residues: residues 3465-3481 (EVIE…DKPP) and 3549-3575 (RGDD…EDRS). A compositionally biased stretch (low complexity) spans 3576-3598 (PATTPDTTPARTPTDESTPTSEP). A compositionally biased stretch (basic and acidic residues) spans 3637–3651 (HTSEGKSGDQGEGDK). Composition is skewed to polar residues over residues 3654 to 3669 (VTAT…TVET), 3676 to 3713 (ETPT…NTSK), 3880 to 3897 (HMSN…QSEK), and 4033 to 4052 (SRNT…VTTK). Over residues 4053 to 4076 (SARDKKTEAAPLKSKSEKAGSEKR) the composition is skewed to basic and acidic residues. The Death domain maps to 4090–4174 (TDIRMAIVAD…DIVTLLEGPI (85 aa)). 2 positions are modified to phosphoserine: S4211 and S4229. 2 disordered regions span residues 4251–4298 (NGSH…EPAS) and 4323–4377 (PVSM…KSHS). Polar residues predominate over residues 4268–4277 (PESQNDVGKQ). Phosphoserine occurs at positions 4290 and 4298. Basic and acidic residues predominate over residues 4337-4347 (GKPRLSLHEEE). Position 4350 is a phosphoserine (S4350). Residues 4362–4377 (VKTKKEIRHVEKKSHS) are compositionally biased toward basic residues.

Directly interacts with DMD and betaDAG1. This interaction does not interfere with binding between DMD and betaDAG1. It is also required for DMD and betaDAG1 retention at costameres. Interacts (via N-terminal ANK repeats) with SCHIP1 isoform 5 (via C-terminus); this interaction is required for the localization at axon initial segments (AISs) and nodes of Ranvier (NRs). May be a constituent of a NFASC/NRCAM/ankyrin G complex. Interacts with RHBG. Interacts with PLEC and FLNC. Interacts with KCNA1; this inhibits channel activity. Interacts (via ANK repeats) with IQCJ-SCHIP1; required for IQCJ-SCHIP1 localization at axon initial segments (AIS) and nodes of Ranvier. Interacts with SCHIP1. Interacts with SCN5A. Interacts with PKP2 and GJA1/CX43. In terms of tissue distribution, expressed in brain, neurons, muscles and other tissues.

The protein localises to the cytoplasm. It localises to the cytoskeleton. The protein resides in the cell projection. Its subcellular location is the axon. It is found in the cell membrane. The protein localises to the sarcolemma. It localises to the postsynaptic cell membrane. The protein resides in the lysosome. Its subcellular location is the T-tubule. It is found in the golgi apparatus. Membrane-cytoskeleton linker. May participate in the maintenance/targeting of ion channels and cell adhesion molecules at the nodes of Ranvier and axonal initial segments. In skeletal muscle, required for costamere localization of DMD and betaDAG1. Regulates KCNA1 channel activity in function of dietary Mg(2+) levels, and thereby contributes to the regulation of renal Mg(2+) reabsorption. Required for intracellular adhesion and junctional conductance in myocytes, potentially via stabilization of GJA1/CX43 protein abundance and promotion of PKP2, GJA1/CX43, and SCN5A/Nav1.5 localization to cell-cell junctions. In terms of biological role, may be part of a Golgi-specific membrane cytoskeleton in association with beta-spectrin. This Homo sapiens (Human) protein is Ankyrin-3.